Consider the following 211-residue polypeptide: MTQNLLDQFGTPKTRVKNAISALRYGHGIIVLDNEDRENEGDLIFSGETMTTEQMALTIRYGSGIVCLCITESKRKQLKLPMMVQNNTSKFGTNFTVTIEAAEGISTGVSAKDRLTTIRAAINDNAKPSDLNRPGHIFPLQAHKNGILGRIGHTEAAIEFVTLAGFKPAGIICELTNRNGTMSKVPDIIKFSKLKKMTIVTIRDLIQYISR.

Residues 37–38, Asp-42, 150–154, and Glu-174 each bind D-ribulose 5-phosphate; these read RE and RIGHT. Mg(2+) is bound at residue Glu-38. His-153 contributes to the Mg(2+) binding site.

It belongs to the DHBP synthase family. As to quaternary structure, homodimer. Requires Mg(2+) as cofactor. Mn(2+) serves as cofactor.

It carries out the reaction D-ribulose 5-phosphate = (2S)-2-hydroxy-3-oxobutyl phosphate + formate + H(+). Its pathway is cofactor biosynthesis; riboflavin biosynthesis; 2-hydroxy-3-oxobutyl phosphate from D-ribulose 5-phosphate: step 1/1. In terms of biological role, catalyzes the conversion of D-ribulose 5-phosphate to formate and 3,4-dihydroxy-2-butanone 4-phosphate. The protein is 3,4-dihydroxy-2-butanone 4-phosphate synthase of Buchnera aphidicola subsp. Baizongia pistaciae (strain Bp).